The following is a 158-amino-acid chain: 6,7-dimethyl-8-ribityllumazine synthase (158 aa).

5-amino-6-(D-ribitylamino)uracil contacts are provided by residues F22, 56–58 (ALE), and 80–82 (VVI). 85-86 (ET) lines the (2S)-2-hydroxy-3-oxobutyl phosphate pocket. H88 (proton donor) is an active-site residue. N113 is a binding site for 5-amino-6-(D-ribitylamino)uracil. R127 lines the (2S)-2-hydroxy-3-oxobutyl phosphate pocket.

It belongs to the DMRL synthase family.

The enzyme catalyses (2S)-2-hydroxy-3-oxobutyl phosphate + 5-amino-6-(D-ribitylamino)uracil = 6,7-dimethyl-8-(1-D-ribityl)lumazine + phosphate + 2 H2O + H(+). The protein operates within cofactor biosynthesis; riboflavin biosynthesis; riboflavin from 2-hydroxy-3-oxobutyl phosphate and 5-amino-6-(D-ribitylamino)uracil: step 1/2. Catalyzes the formation of 6,7-dimethyl-8-ribityllumazine by condensation of 5-amino-6-(D-ribitylamino)uracil with 3,4-dihydroxy-2-butanone 4-phosphate. This is the penultimate step in the biosynthesis of riboflavin. This chain is 6,7-dimethyl-8-ribityllumazine synthase, found in Neisseria meningitidis serogroup C (strain 053442).